The sequence spans 545 residues: Chaperonin GroEL (545 aa).

ATP-binding positions include 29–32, lysine 50, 86–90, glycine 414, 477–479, and aspartate 493; these read TMGP, DGTTT, and DAA.

This sequence belongs to the chaperonin (HSP60) family. As to quaternary structure, forms a cylinder of 14 subunits composed of two heptameric rings stacked back-to-back. Interacts with the co-chaperonin GroES.

It localises to the cytoplasm. The catalysed reaction is ATP + H2O + a folded polypeptide = ADP + phosphate + an unfolded polypeptide.. Its function is as follows. Together with its co-chaperonin GroES, plays an essential role in assisting protein folding. The GroEL-GroES system forms a nano-cage that allows encapsulation of the non-native substrate proteins and provides a physical environment optimized to promote and accelerate protein folding. The polypeptide is Chaperonin GroEL (Campylobacter jejuni subsp. jejuni serotype O:6 (strain 81116 / NCTC 11828)).